We begin with the raw amino-acid sequence, 219 residues long: Large ribosomal subunit protein uL16 (219 aa).

It belongs to the universal ribosomal protein uL16 family. In terms of assembly, component of the small ribosomal subunit. Mature ribosomes consist of a small (40S) and a large (60S) subunit. The 40S subunit contains about 33 different proteins and 1 molecule of RNA (18S). The 60S subunit contains about 49 different proteins and 3 molecules of RNA (25S, 5.8S and 5S).

This Encephalitozoon cuniculi (strain GB-M1) (Microsporidian parasite) protein is Large ribosomal subunit protein uL16 (RPL10).